The chain runs to 159 residues: Neuroglobin (159 aa).

One can recognise a Globin domain in the interval 3 to 151; that stretch reads KLSEKDKELI…VVAAMSQGWA (149 aa). Residues histidine 66 and histidine 98 each coordinate heme b.

The protein belongs to the globin family. In terms of assembly, monomer. Homodimers and homotetramers. Mainly monomeric but also detected as part of homodimers and homotetramers.

The protein localises to the cytoplasm. Its subcellular location is the cytosol. The protein resides in the mitochondrion matrix. The catalysed reaction is Fe(III)-heme b-[protein] + nitric oxide + H2O = Fe(II)-heme b-[protein] + nitrite + 2 H(+). Monomeric globin with a bis-histidyl six-coordinate heme-iron atom through which it can bind dioxygen, carbon monoxide and nitric oxide. Could help transport oxygen and increase its availability to the metabolically active neuronal tissues, though its low quantity in tissues as well as its high affinity for dioxygen, which may limit its oxygen-releasing ability, argue against it. The ferrous/deoxygenated form exhibits a nitrite reductase activity and it could produce nitric oxide which in turn inhibits cellular respiration in response to hypoxia. In its ferrous/deoxygenated state, it may also exhibit GDI (Guanine nucleotide Dissociation Inhibitor) activity toward heterotrimeric G-alpha proteins, thereby regulating signal transduction to facilitate neuroprotective responses in the wake of hypoxia and associated oxidative stress. In Dissostichus mawsoni (Antarctic cod), this protein is Neuroglobin (ngb).